A 367-amino-acid chain; its full sequence is Glycolate oxidase 1 (367 aa).

N-acetylmethionine is present on Met-1. Tyr-24 contributes to the glyoxylate binding site. FMN contacts are provided by residues 77 to 79 (PTA), Ser-106, 127 to 129 (QLY), and Thr-155. Glyoxylate is bound at residue Tyr-129. Arg-164 provides a ligand contact to glyoxylate. Positions 230 and 252 each coordinate FMN. The glyoxylate site is built by His-254 and Arg-257. Residue His-254 is the Proton acceptor of the active site. Residues 285 to 289 (DGGVR) and 308 to 309 (GR) contribute to the FMN site.

The protein belongs to the FMN-dependent alpha-hydroxy acid dehydrogenase family. As to quaternary structure, homotetramer. The cofactor is FMN.

It localises to the peroxisome. The enzyme catalyses glycolate + O2 = glyoxylate + H2O2. The protein operates within photosynthesis; photorespiration; glycine from 2-phosphoglycolate: step 2/3. Functionally, catalyzes the oxidation of glycolate to glyoxylate, with a reduction of O2 to H2O2. Is a key enzyme in photorespiration in green plants. In Arabidopsis thaliana (Mouse-ear cress), this protein is Glycolate oxidase 1 (GLO1).